A 510-amino-acid chain; its full sequence is ATP-dependent zinc metalloprotease FtsH 2 (510 aa).

Topologically, residues 1–4 (MKKN) are cytoplasmic. The helical transmembrane segment at 5–25 (LHIIILALSIFINLLFIYIFI) threads the bilayer. At 26-31 (SEVKPN) the chain is on the extracellular side. The helical transmembrane segment at 32 to 52 (LNLNLSFILTAAVIVVTYLLF) threads the bilayer. Over 53–510 (KNKFSELMPV…LWEEENTLCV (458 aa)) the chain is Cytoplasmic. 124-131 (GPPGTGKT) serves as a coordination point for ATP. Position 343 (histidine 343) interacts with Zn(2+). Glutamate 344 is an active-site residue. The Zn(2+) site is built by histidine 347 and aspartate 418.

The protein in the central section; belongs to the AAA ATPase family. This sequence in the C-terminal section; belongs to the peptidase M41 family. Homohexamer. Zn(2+) is required as a cofactor.

The protein resides in the cell membrane. Its function is as follows. Acts as a processive, ATP-dependent zinc metallopeptidase for both cytoplasmic and membrane proteins. Plays a role in the quality control of integral membrane proteins. The sequence is that of ATP-dependent zinc metalloprotease FtsH 2 from Thermoanaerobacter sp. (strain X514).